The chain runs to 207 residues: Ribosomal RNA large subunit methyltransferase E (207 aa).

Positions 60, 62, 80, 96, and 121 each coordinate S-adenosyl-L-methionine. Lys-161 (proton acceptor) is an active-site residue.

The protein belongs to the class I-like SAM-binding methyltransferase superfamily. RNA methyltransferase RlmE family.

It localises to the cytoplasm. It catalyses the reaction uridine(2552) in 23S rRNA + S-adenosyl-L-methionine = 2'-O-methyluridine(2552) in 23S rRNA + S-adenosyl-L-homocysteine + H(+). Specifically methylates the uridine in position 2552 of 23S rRNA at the 2'-O position of the ribose in the fully assembled 50S ribosomal subunit. The sequence is that of Ribosomal RNA large subunit methyltransferase E from Pseudomonas paraeruginosa (strain DSM 24068 / PA7) (Pseudomonas aeruginosa (strain PA7)).